Reading from the N-terminus, the 632-residue chain is 1-deoxy-D-xylulose-5-phosphate synthase (632 aa).

Residues His87 and 128–130 (GHS) each bind thiamine diphosphate. Asp159 contributes to the Mg(2+) binding site. Residues 160–161 (GA), Asn188, Phe295, and Glu378 each bind thiamine diphosphate. Asn188 is a Mg(2+) binding site.

It belongs to the transketolase family. DXPS subfamily. In terms of assembly, homodimer. Mg(2+) is required as a cofactor. Thiamine diphosphate serves as cofactor.

The enzyme catalyses D-glyceraldehyde 3-phosphate + pyruvate + H(+) = 1-deoxy-D-xylulose 5-phosphate + CO2. Its pathway is metabolic intermediate biosynthesis; 1-deoxy-D-xylulose 5-phosphate biosynthesis; 1-deoxy-D-xylulose 5-phosphate from D-glyceraldehyde 3-phosphate and pyruvate: step 1/1. Functionally, catalyzes the acyloin condensation reaction between C atoms 2 and 3 of pyruvate and glyceraldehyde 3-phosphate to yield 1-deoxy-D-xylulose-5-phosphate (DXP). The polypeptide is 1-deoxy-D-xylulose-5-phosphate synthase (Pseudomonas fluorescens (strain SBW25)).